Consider the following 275-residue polypeptide: 4-hydroxy-tetrahydrodipicolinate reductase (275 aa).

NAD(+)-binding positions include 8–13 (GATGRM), 100–102 (GTT), and 126–129 (SPNM). Residue histidine 160 is the Proton donor/acceptor of the active site. Histidine 161 is a binding site for (S)-2,3,4,5-tetrahydrodipicolinate. Lysine 164 functions as the Proton donor in the catalytic mechanism. 170 to 171 (GT) lines the (S)-2,3,4,5-tetrahydrodipicolinate pocket.

Belongs to the DapB family.

Its subcellular location is the cytoplasm. The enzyme catalyses (S)-2,3,4,5-tetrahydrodipicolinate + NAD(+) + H2O = (2S,4S)-4-hydroxy-2,3,4,5-tetrahydrodipicolinate + NADH + H(+). The catalysed reaction is (S)-2,3,4,5-tetrahydrodipicolinate + NADP(+) + H2O = (2S,4S)-4-hydroxy-2,3,4,5-tetrahydrodipicolinate + NADPH + H(+). Its pathway is amino-acid biosynthesis; L-lysine biosynthesis via DAP pathway; (S)-tetrahydrodipicolinate from L-aspartate: step 4/4. Functionally, catalyzes the conversion of 4-hydroxy-tetrahydrodipicolinate (HTPA) to tetrahydrodipicolinate. The protein is 4-hydroxy-tetrahydrodipicolinate reductase of Methanopyrus kandleri (strain AV19 / DSM 6324 / JCM 9639 / NBRC 100938).